A 615-amino-acid polypeptide reads, in one-letter code: MRALLLLGFLLVSLESTLSIPPWEAPKEHKYKAEEHTVVLTVTGEPCHFPFQYHRQLYHKCTHKGRPGPQPWCATTPNFDQDQRWGYCLEPKKVKDHCSKHSPCQKGGTCVNMPSGPHCLCPQHLTGNHCQKEKCFEPQLLRFFHKNEIWYRTEQAAVARCQCKGPDAHCQRLASQACRTNPCLHGGRCLEVEGHRLCHCPVGYTGAFCDVDTKASCYDGRGLSYRGLARTTLSGAPCQPWASEATYRNVTAEQARNWGLGGHAFCRNPDNDIRPWCFVLNRDRLSWEYCDLAQCQTPTQAAPPTPVSPRLHVPLMPAQPAPPKPQPTTRTPPQSQTPGALPAKREQPPSLTRNGPLSCGQRLRKSLSSMTRVVGGLVALRGAHPYIAALYWGHSFCAGSLIAPCWVLTAAHCLQDRPAPEDLTVVLGQERRNHSCEPCQTLAVRSYRLHEAFSPVSYQHDLALLRLQEDADGSCALLSPYVQPVCLPSGAARPSETTLCQVAGWGHQFEGAEEYASFLQEAQVPFLSLERCSAPDVHGSSILPGMLCAGFLEGGTDACQGDSGGPLVCEDQAAERRLTLQGIISWGSGCGDRNKPGVYTDVAYYLAWIREHTVS.

The signal sequence occupies residues Met-1–Ser-19. The region spanning Val-42 to Glu-90 is the Fibronectin type-II domain. 13 disulfides stabilise this stretch: Cys-47/Cys-73, Cys-61/Cys-88, Cys-98/Cys-110, Cys-104/Cys-119, Cys-121/Cys-130, Cys-135/Cys-163, Cys-161/Cys-170, Cys-178/Cys-189, Cys-183/Cys-198, Cys-200/Cys-209, Cys-217/Cys-295, Cys-238/Cys-277, and Cys-266/Cys-290. One can recognise an EGF-like 1 domain in the interval Val-94–Gln-131. Thr-109 carries O-linked (Fuc) threonine glycosylation. In terms of domain architecture, Fibronectin type-I spans Glu-133–Leu-173. Residues Ala-174–Asp-210 form the EGF-like 2 domain. The Kringle domain maps to Cys-217–Cys-295. The N-linked (GlcNAc...) asparagine glycan is linked to Asn-249. Positions Pro-298 to Cys-359 are disordered. Residues Thr-299 and Thr-305 are each glycosylated (O-linked (GalNAc...) threonine). An O-linked (GalNAc...) serine glycan is attached at Ser-308. Residues Pro-317–Gln-326 are compositionally biased toward pro residues. The span at Pro-327–Pro-338 shows a compositional bias: low complexity. Residues Thr-328, Thr-329, and Thr-337 are each glycosylated (O-linked (GalNAc...) threonine). Disulfide bonds link Cys-359–Cys-486, Cys-397–Cys-413, Cys-405–Cys-475, Cys-436–Cys-439, Cys-500–Cys-569, Cys-532–Cys-548, and Cys-559–Cys-590. A Peptidase S1 domain is found at Val-373–Val-614. His-412 serves as the catalytic Charge relay system. Asn-433 carries an N-linked (GlcNAc...) asparagine glycan. The Charge relay system role is filled by Asp-461. The Charge relay system role is filled by Ser-563.

This sequence belongs to the peptidase S1 family. In terms of assembly, interacts with HRG; the interaction, which is enhanced in the presence of zinc ions and inhibited by heparin-binding, inhibits factor XII autoactivation and contact-initiated coagulation. Interacts (inactive and activated) with D7L2, an anticoagulant protein from Anopheles gambiae. Interacts (activated) with iripin-8, a serine protease inhibitor from Ixodes ricinus saliva. Interacts (inactive and activated) (via amino acids 1-77) with triafestin-1 and triafestin-2, anticoagulant proteins from Triatoma infestans. Interacts (inactive and activated) (via amino acids 1-77) with short form salivary protein D7R1, an anticoagulant protein from Anopheles stephensi. Interacts (inactive and activated) (via fibronectin type II domain) with haemaphysalin, an anticoagulant protein from Haemaphysalis longicornis. Factor XII is activated by kallikrein in alpha-factor XIIa, which is further converted by trypsin into beta-factor XIIa. Alpha-factor XIIa is composed of an NH2-terminal heavy chain, called coagulation factor XIIa heavy chain, and a COOH-terminal light chain, called coagulation factor XIIa light chain, connected by a disulfide bond. Beta-factor XIIa is composed of 2 chains linked by a disulfide bond, an N-terminal nonapeptide, called beta-factor XIIa part 1, and coagulation factor XIIa light chain, also known in this context as beta-factor XIIa part 2. Post-translationally, O- and N-glycosylated. The O-linked polysaccharides were not identified, but are probably the mucin type linked to GalNAc.

It is found in the secreted. The enzyme catalyses Selective cleavage of Arg-|-Ile bonds in factor VII to form factor VIIa and factor XI to form factor XIa.. With respect to regulation, activity is promoted in the presence of negatively charged surfaces. Its function is as follows. Factor XII is a serum glycoprotein that participates in the initiation of blood coagulation, fibrinolysis, and the generation of bradykinin and angiotensin. Prekallikrein is cleaved by factor XII to form kallikrein, which then cleaves factor XII first to alpha-factor XIIa and then trypsin cleaves it to beta-factor XIIa. Alpha-factor XIIa activates factor XI to factor XIa. In Homo sapiens (Human), this protein is Coagulation factor XII (F12).